The following is a 341-amino-acid chain: Cytoplasmic tRNA 2-thiolation protein 1 (341 aa).

The protein belongs to the TtcA family. CTU1/NCS6/ATPBD3 subfamily.

The protein resides in the cytoplasm. The protein operates within tRNA modification; 5-methoxycarbonylmethyl-2-thiouridine-tRNA biosynthesis. Its function is as follows. Plays a central role in 2-thiolation of mcm(5)S(2)U at tRNA wobble positions of tRNA(Lys), tRNA(Glu) and tRNA(Gln). Directly binds tRNAs and probably acts by catalyzing adenylation of tRNAs, an intermediate required for 2-thiolation. It is unclear whether it acts as a sulfurtransferase that transfers sulfur from thiocarboxylated URM1 onto the uridine of tRNAs at wobble position. The sequence is that of Cytoplasmic tRNA 2-thiolation protein 1 from Aedes aegypti (Yellowfever mosquito).